A 62-amino-acid polypeptide reads, in one-letter code: Cryptic Mu-phage protein com (62 aa).

The protein belongs to the com family.

The chain is Cryptic Mu-phage protein com from Shigella dysenteriae.